The primary structure comprises 201 residues: Thymidine kinase (201 aa).

Residues 9–16 (SAMNAGKS) and 87–90 (DECH) each bind ATP. Catalysis depends on Glu88, which acts as the Proton acceptor. Residues Cys145, Cys147, Cys182, and His185 each contribute to the Zn(2+) site.

The protein belongs to the thymidine kinase family. Homotetramer.

Its subcellular location is the cytoplasm. It carries out the reaction thymidine + ATP = dTMP + ADP + H(+). This is Thymidine kinase from Photorhabdus laumondii subsp. laumondii (strain DSM 15139 / CIP 105565 / TT01) (Photorhabdus luminescens subsp. laumondii).